A 149-amino-acid polypeptide reads, in one-letter code: MERTFLAVKPDGVQRALVGEIIRRFEAKGFKLVGLKLMNVSKDLAEQHYGEHKEKPFFPGLVQFITSGPVVAMVWEGKGVVASARKIIGATNPLNSEPGTIRGDYGVDIGRNIIHGSDAVETAQREIALWFQPAELVSWEPTLTSWIYE.

The ATP site is built by K9, F57, R85, T91, R102, and N112. H115 (pros-phosphohistidine intermediate) is an active-site residue.

The protein belongs to the NDK family. Homotetramer. The cofactor is Mg(2+).

It localises to the cytoplasm. The catalysed reaction is a 2'-deoxyribonucleoside 5'-diphosphate + ATP = a 2'-deoxyribonucleoside 5'-triphosphate + ADP. The enzyme catalyses a ribonucleoside 5'-diphosphate + ATP = a ribonucleoside 5'-triphosphate + ADP. In terms of biological role, major role in the synthesis of nucleoside triphosphates other than ATP. The ATP gamma phosphate is transferred to the NDP beta phosphate via a ping-pong mechanism, using a phosphorylated active-site intermediate. In Cyanothece sp. (strain PCC 7425 / ATCC 29141), this protein is Nucleoside diphosphate kinase.